A 316-amino-acid polypeptide reads, in one-letter code: Tyrosine--tRNA ligase 2 (316 aa).

L-tyrosine contacts are provided by tyrosine 26, tyrosine 146, glutamine 150, aspartate 153, and glutamine 168. Positions 219–223 (KMSKS) match the 'KMSKS' region motif. Lysine 222 is an ATP binding site.

The protein belongs to the class-I aminoacyl-tRNA synthetase family. TyrS type 4 subfamily. Homodimer.

It is found in the cytoplasm. It carries out the reaction tRNA(Tyr) + L-tyrosine + ATP = L-tyrosyl-tRNA(Tyr) + AMP + diphosphate + H(+). In terms of biological role, catalyzes the attachment of tyrosine to tRNA(Tyr) in a two-step reaction: tyrosine is first activated by ATP to form Tyr-AMP and then transferred to the acceptor end of tRNA(Tyr). The polypeptide is Tyrosine--tRNA ligase 2 (Pyrobaculum aerophilum (strain ATCC 51768 / DSM 7523 / JCM 9630 / CIP 104966 / NBRC 100827 / IM2)).